Reading from the N-terminus, the 712-residue chain is Autophagy-related protein 13 (712 aa).

Disordered stretches follow at residues alanine 388 to proline 443 and glycine 568 to glutamate 611. Positions serine 402–glycine 415 are enriched in low complexity. Residues serine 412 to histidine 420 are ATG17-binding. Basic and acidic residues predominate over residues arginine 424–asparagine 439. Residues threonine 441–aspartate 500 are ATG1-binding. The segment covering threonine 576 to aspartate 585 has biased composition (acidic residues).

Belongs to the ATG13 family. Fungi subfamily. As to quaternary structure, hypophosphorylated form interacts with ATG1 to form the ATG1-ATG13 kinase complex. The ATG1-ATG13 complex interacts with the ATG17-ATG29-ATG31 complex through direct interaction with ATG17. Interacts with VAC8. Hyperphosphorylated under nutrient-rich conditions. Starvation and TOR inactivation results in ATG13 partial dephosphorylation leading to ATG1-binding. Dephosphorylation induces ATG17-binding.

The protein resides in the cytoplasm. It is found in the preautophagosomal structure. Its function is as follows. Activates the ATG1 kinase in a nutritional condition dependent manner through the TOR pathway, leading to autophagy. Involved in ATG9 and ATG23 cycling through the pre-autophagosomal structure. Also involved in cytoplasm to vacuole transport (Cvt) and more specifically in Cvt vesicle formation. Seems to play a role in the switching machinery regulating the conversion between the Cvt pathway and autophagy. Finally, ATG13 is also required for glycogen storage during stationary phase. This is Autophagy-related protein 13 from Kluyveromyces marxianus (strain DMKU3-1042 / BCC 29191 / NBRC 104275) (Yeast).